Reading from the N-terminus, the 221-residue chain is MAQKLWGSCLFSLFMAALAQETLNPQKSKVDCNKGVTGTVYEYGANTIDGGEFVNFQQYAGKHILFVNVASFCGLTATYPELNTLQEELKPFNVTVLGFPCNQFGKQEPGKNSEILLGLKYVRPGGGYVPNFQLFEKGDVNGDNEQKVFSFLKNSCPPTSELFGSPEHLFWDPMKVHDIRWNFEKFLVGPDGVPVMRWFHHTPVRIVQSDIMEYLNQTSTQ.

The N-terminal stretch at 1–19 is a signal peptide; it reads MAQKLWGSCLFSLFMAALA. Residue Cys73 is part of the active site.

The protein belongs to the glutathione peroxidase family.

It is found in the secreted. It catalyses the reaction 2 glutathione + H2O2 = glutathione disulfide + 2 H2O. This chain is Glutathione peroxidase 6 (Gpx6), found in Mus musculus (Mouse).